Here is a 139-residue protein sequence, read N- to C-terminus: Aspartate 1-decarboxylase (139 aa).

The Schiff-base intermediate with substrate; via pyruvic acid role is filled by serine 26. Serine 26 bears the Pyruvic acid (Ser) mark. Threonine 58 is a binding site for substrate. The active-site Proton donor is tyrosine 59. Substrate is bound at residue glycine 72–alanine 74.

This sequence belongs to the PanD family. As to quaternary structure, heterooctamer of four alpha and four beta subunits. Requires pyruvate as cofactor. Is synthesized initially as an inactive proenzyme, which is activated by self-cleavage at a specific serine bond to produce a beta-subunit with a hydroxyl group at its C-terminus and an alpha-subunit with a pyruvoyl group at its N-terminus.

The protein resides in the cytoplasm. It catalyses the reaction L-aspartate + H(+) = beta-alanine + CO2. It participates in cofactor biosynthesis; (R)-pantothenate biosynthesis; beta-alanine from L-aspartate: step 1/1. In terms of biological role, catalyzes the pyruvoyl-dependent decarboxylation of aspartate to produce beta-alanine. In Microcystis aeruginosa (strain NIES-843 / IAM M-2473), this protein is Aspartate 1-decarboxylase.